Here is a 455-residue protein sequence, read N- to C-terminus: Mu-like prophage FluMu DNA circularization protein (455 aa).

Residues 368–387 (VILDNADAEQWTSYAALEQY) constitute a DNA-binding region (H-T-H motif).

It to phage Mu protein N.

The sequence is that of Mu-like prophage FluMu DNA circularization protein from Haemophilus influenzae (strain ATCC 51907 / DSM 11121 / KW20 / Rd).